The chain runs to 188 residues: Cell division protein SepF (188 aa).

Residues 29–53 (EQQDQDQRATQADGGALATLGDSNP) form a disordered region.

Belongs to the SepF family. Homodimer. Interacts with FtsZ.

It localises to the cytoplasm. Its function is as follows. Cell division protein that is part of the divisome complex and is recruited early to the Z-ring. Probably stimulates Z-ring formation, perhaps through the cross-linking of FtsZ protofilaments. Its function overlaps with FtsA. The chain is Cell division protein SepF from Synechococcus sp. (strain CC9902).